A 454-amino-acid chain; its full sequence is MNDYKMTPGERRATWGLGTVFSLRMLGMFMVLPVLTTYGMALQGASEALIGIAIGIYGLTQAVFQIPFGLLSDRIGRKPLIVGGLAVFAAGSVIAALSDSIWGIILGRALQGSGAIAAAVMALLSDLTREQNRTKAMAFIGVSFGITFAIAMVLGPIITHKLGLHALFWMIAILATTGIALTIWVVPNSSTHVLNRESGMVKGSFSKVLAEPRLLKLNFGIMCLHILLMSTFVALPGQLADAGFPAAEHWKVYLATMLIAFGSVVPFIIYAEVKRKMKQVFVFCVGLIVVAEIVLWNAQTQFWQLVVGVQLFFVAFNLMEALLPSLISKESPAGYKGTAMGVYSTSQFLGVAIGGSLGGWINGMFDGQGVFLAGAMLAAVWLTVASTMKEPPYVSSLRIEIPANIAANEALKVRLLETEGIKEVLIAEEEHSAYVKIDSKVTNRFEIEQAIRQA.

Over 1–14 the chain is Periplasmic; that stretch reads MNDYKMTPGERRAT. A helical membrane pass occupies residues 15 to 35; sequence WGLGTVFSLRMLGMFMVLPVL. The Cytoplasmic segment spans residues 36 to 47; the sequence is TTYGMALQGASE. A helical transmembrane segment spans residues 48–68; sequence ALIGIAIGIYGLTQAVFQIPF. Residues 69-84 lie on the Periplasmic side of the membrane; that stretch reads GLLSDRIGRKPLIVGG. The helical transmembrane segment at 85-105 threads the bilayer; sequence LAVFAAGSVIAALSDSIWGII. At 106–137 the chain is on the cytoplasmic side; it reads LGRALQGSGAIAAAVMALLSDLTREQNRTKAM. The chain crosses the membrane as a helical span at residues 138 to 158; sequence AFIGVSFGITFAIAMVLGPII. Topologically, residues 159–165 are periplasmic; sequence THKLGLH. Residues 166–186 traverse the membrane as a helical segment; that stretch reads ALFWMIAILATTGIALTIWVV. The Cytoplasmic segment spans residues 187–216; that stretch reads PNSSTHVLNRESGMVKGSFSKVLAEPRLLK. The helical transmembrane segment at 217–237 threads the bilayer; that stretch reads LNFGIMCLHILLMSTFVALPG. The Periplasmic segment spans residues 238 to 252; it reads QLADAGFPAAEHWKV. The chain crosses the membrane as a helical span at residues 253–273; the sequence is YLATMLIAFGSVVPFIIYAEV. Residues 274-279 are Cytoplasmic-facing; it reads KRKMKQ. The chain crosses the membrane as a helical span at residues 280 to 300; the sequence is VFVFCVGLIVVAEIVLWNAQT. The Periplasmic portion of the chain corresponds to 301–306; sequence QFWQLV. A helical transmembrane segment spans residues 307–327; the sequence is VGVQLFFVAFNLMEALLPSLI. The Cytoplasmic segment spans residues 328–340; sequence SKESPAGYKGTAM. A helical transmembrane segment spans residues 341 to 361; it reads GVYSTSQFLGVAIGGSLGGWI. The Periplasmic segment spans residues 362–363; it reads NG. The helical transmembrane segment at 364–384 threads the bilayer; the sequence is MFDGQGVFLAGAMLAAVWLTV. Over 385–454 the chain is Cytoplasmic; that stretch reads ASTMKEPPYV…FEIEQAIRQA (70 aa).

The protein belongs to the major facilitator superfamily.

The protein localises to the cell inner membrane. This chain is Inner membrane transport protein YajR (yajR), found in Escherichia coli (strain K12).